A 347-amino-acid chain; its full sequence is NADH-ubiquinone oxidoreductase chain 2 (347 aa).

A run of 10 helical transmembrane segments spans residues proline 3–serine 23, histidine 25–methionine 45, tyrosine 59–leucine 79, isoleucine 96–proline 116, glycine 148–leucine 170, isoleucine 178–proline 198, methionine 200–methionine 220, isoleucine 247–isoleucine 267, isoleucine 276–leucine 296, and leucine 326–leucine 346.

This sequence belongs to the complex I subunit 2 family. Core subunit of respiratory chain NADH dehydrogenase (Complex I) which is composed of 45 different subunits. Interacts with TMEM242.

It is found in the mitochondrion inner membrane. It carries out the reaction a ubiquinone + NADH + 5 H(+)(in) = a ubiquinol + NAD(+) + 4 H(+)(out). In terms of biological role, core subunit of the mitochondrial membrane respiratory chain NADH dehydrogenase (Complex I) which catalyzes electron transfer from NADH through the respiratory chain, using ubiquinone as an electron acceptor. Essential for the catalytic activity and assembly of complex I. In Saccopteryx leptura (Lesser sac-winged bat), this protein is NADH-ubiquinone oxidoreductase chain 2.